The chain runs to 573 residues: Anti-Muellerian hormone type-2 receptor (573 aa).

Positions 1 to 17 are cleaved as a signal peptide; that stretch reads MLGSLGLWALLPTAVEA. The Extracellular segment spans residues 18 to 149; that stretch reads PPNRRTCVFF…APGESIWMAL (132 aa). Disulfide bonds link C55–C79 and C92–C109. The N-linked (GlcNAc...) asparagine glycan is linked to N66. N119 carries an N-linked (GlcNAc...) asparagine glycan. Residues 150–170 form a helical membrane-spanning segment; it reads VLLGLFLLLLLLLGSIILALL. Residues 171 to 573 are Cytoplasmic-facing; it reads QRKNYRVRGE…PQPACTLSPV (403 aa). Residues 203–518 form the Protein kinase domain; that stretch reads LCFSQVIREG…AHPQESHPFP (316 aa). ATP-binding positions include 209–217 and K230; that span reads IREGGHAVV. The active-site Proton acceptor is the D333.

This sequence belongs to the protein kinase superfamily. TKL Ser/Thr protein kinase family. TGFB receptor subfamily. As to quaternary structure, interacts with type I receptor ACVR1. The cofactor is Mg(2+). It depends on Mn(2+) as a cofactor.

Its subcellular location is the membrane. It catalyses the reaction L-threonyl-[receptor-protein] + ATP = O-phospho-L-threonyl-[receptor-protein] + ADP + H(+). The enzyme catalyses L-seryl-[receptor-protein] + ATP = O-phospho-L-seryl-[receptor-protein] + ADP + H(+). Functionally, on ligand binding, forms a receptor complex consisting of two type II and two type I transmembrane serine/threonine kinases. Type II receptors phosphorylate and activate type I receptors which autophosphorylate, then bind and activate SMAD transcriptional regulators. Receptor for anti-Muellerian hormone. This Homo sapiens (Human) protein is Anti-Muellerian hormone type-2 receptor (AMHR2).